A 107-amino-acid polypeptide reads, in one-letter code: Putative ATP synthase subunit f, mitochondrial (107 aa).

This sequence belongs to the ATPase F chain family. F-type ATPases have 2 components, CF(1) - the catalytic core - and CF(0) - the membrane proton channel. CF(0) seems to have nine subunits: a, b, c, d, e, f, g, F6 and 8 (or A6L).

It localises to the mitochondrion membrane. Functionally, mitochondrial membrane ATP synthase (F(1)F(0) ATP synthase or Complex V) produces ATP from ADP in the presence of a proton gradient across the membrane which is generated by electron transport complexes of the respiratory chain. F-type ATPases consist of two structural domains, F(1) - containing the extramembraneous catalytic core and F(0) - containing the membrane proton channel, linked together by a central stalk and a peripheral stalk. During catalysis, ATP synthesis in the catalytic domain of F(1) is coupled via a rotary mechanism of the central stalk subunits to proton translocation. Part of the complex F(0) domain. Minor subunit located with subunit a in the membrane. The sequence is that of Putative ATP synthase subunit f, mitochondrial from Drosophila melanogaster (Fruit fly).